Consider the following 497-residue polypeptide: Probable gamma-aminobutyrate transaminase 2, mitochondrial (497 aa).

The transit peptide at 1–37 directs the protein to the mitochondrion; sequence MNLIKHAAFAASFQGETDCTSHASARKFSTSGSSPLL. 153–154 is a pyridoxal 5'-phosphate binding site; that stretch reads GS. Y186 provides a ligand contact to substrate. D293 lines the pyridoxal 5'-phosphate pocket. Residue K322 participates in substrate binding. At K322 the chain carries N6-(pyridoxal phosphate)lysine.

This sequence belongs to the class-III pyridoxal-phosphate-dependent aminotransferase family.

Its subcellular location is the mitochondrion. The enzyme catalyses 4-aminobutanoate + pyruvate = succinate semialdehyde + L-alanine. It catalyses the reaction 4-aminobutanoate + glyoxylate = succinate semialdehyde + glycine. Functionally, transaminase that degrades gamma-amino butyric acid (GABA). The sequence is that of Probable gamma-aminobutyrate transaminase 2, mitochondrial from Oryza sativa subsp. indica (Rice).